The sequence spans 415 residues: Intron-encoded DNA endonuclease aI3 (415 aa).

The COX1 exons 1 to 3 encoded stretch occupies residues 1-81 (MVQRWLYSTN…MPALIGGFGN (81 aa)). Helical transmembrane passes span 16 to 36 (VLYF…SLII) and 57 to 77 (VLVV…ALIG). The COX1 intron 3 encoded stretch occupies residues 82–415 (QKRYESNNNN…HLKNTYLENK (334 aa)).

In the C-terminal section; belongs to the LAGLIDADG endonuclease family. Mg(2+) serves as cofactor. In terms of processing, the mature protein may arise from proteolytic cleavage of an in-frame translation of some COX1 exons plus the intron containing the aI3 open reading frame.

It is found in the mitochondrion. Its subcellular location is the membrane. Its function is as follows. Mitochondrial DNA endonuclease involved in intron homing. It introduces a specific double-strand break in the DNA of the COX1 gene and thus mediates the insertion of an intron, containing its own coding sequence (group I intron), into an intronless gene. Recognizes with high specificity and cleaves the sequence 5'-GGTTTTGGTAACTATTTATTAC-3'. In Saccharomyces cerevisiae (strain ATCC 204508 / S288c) (Baker's yeast), this protein is Intron-encoded DNA endonuclease aI3 (AI3).